Consider the following 290-residue polypeptide: Pyridoxal kinase PdxY (290 aa).

Substrate contacts are provided by residues Ser12 and 47-48; that span reads TQ. ATP-binding positions include Asp114, Glu151, Lys184, and 211–214; that span reads RPLL. Residue Asp225 coordinates substrate.

This sequence belongs to the pyridoxine kinase family. PdxY subfamily. As to quaternary structure, homodimer. Requires Mg(2+) as cofactor.

It catalyses the reaction pyridoxal + ATP = pyridoxal 5'-phosphate + ADP + H(+). The protein operates within cofactor metabolism; pyridoxal 5'-phosphate salvage; pyridoxal 5'-phosphate from pyridoxal: step 1/1. In terms of biological role, pyridoxal kinase involved in the salvage pathway of pyridoxal 5'-phosphate (PLP). Catalyzes the phosphorylation of pyridoxal to PLP. In Pseudomonas putida (strain GB-1), this protein is Pyridoxal kinase PdxY.